Here is a 578-residue protein sequence, read N- to C-terminus: Nuclear receptor subfamily 1 group D member 2 (578 aa).

The segment at 1–60 is required for phosphorylation by CSNK1E and cytoplasmic localization; it reads MELNAGGVIAYISSSSSASSPASCHSEGSENSFQSSSSSVPSSPNSSNCDANGNPKNTDV. The tract at residues 1 to 99 is modulating; sequence MELNAGGVIA…HSGMTKFSGM (99 aa). The span at 13–47 shows a compositional bias: low complexity; the sequence is SSSSSASSPASCHSEGSENSFQSSSSSVPSSPNSS. The disordered stretch occupies residues 13 to 89; the sequence is SSSSSASSPA…KPGAPGMTKS (77 aa). Ser46 is subject to Phosphoserine; by GSK3-beta. Residues 48 to 61 show a composition bias toward polar residues; sequence NCDANGNPKNTDVS. The nuclear receptor DNA-binding region spans 100-176; it reads VLLCKVCGDV…VGMSRDAVRF (77 aa). 2 NR C4-type zinc fingers span residues 103–123 and 140–164; these read CKVC…CEGC and CLKN…FKKC. N6-acetyllysine; by KAT5 occurs at positions 162 and 163. Positions 214 to 247 are disordered; sequence EPHEQSVPPAQEQLRPKPQLEQENIKSTPPPSDF. A compositionally biased stretch (basic and acidic residues) spans 227 to 237; that stretch reads LRPKPQLEQEN. 2 disulfide bridges follow: Cys336–Cys342 and Cys373–Cys383. One can recognise an NR LBD domain in the interval 368–578; it reads RNSYLCSTGG…EELLAFKVHP (211 aa). Positions 383 and 567 each coordinate heme. An interaction with ZNHIT1 region spans residues 396–578; it reads SGHEIWEEFS…EELLAFKVHP (183 aa).

The protein belongs to the nuclear hormone receptor family. NR1 subfamily. In terms of assembly, binds DNA as a monomer or a homodimer. Interacts with NCOA5 coactivator, leading to a strong increase of transcription of target genes. Interacts (via N-terminus) with KAT5. Interacts (via C-terminus) with HDAC1. Interacts with ZNHIT1. Interacts with SIAH2. Deacetylated by HDAC1. Acetylation and deacetylation regulate its transcriptional regulatory activity. Post-translationally, under more reducing intracellular redox conditions, Cys-383 is in its heme-bound state, which is optimal for recruitment of the NCOR1/HDAC3 corepressor complex and repression of target genes. When subjected to oxidative stress conditions, Cys-383 undergoes oxidation to form a disulfide bridge with Cys-373, also triggering a ligand switch that results in release of bound heme and derepression of target genes. In terms of processing, ubiquitinated by SIAH2; leading to its proteasomal degradation. Phosphorylated by CSNK1E; phosphorylation enhances its cytoplasmic localization.

Its subcellular location is the nucleus. The protein resides in the cytoplasm. The heme-bound form can bind gaseous signaling molecules such as CO and nitric oxide (NO) and NO can reverse its transcriptional repressor activity. Its function is as follows. Transcriptional repressor which coordinates circadian rhythm and metabolic pathways in a heme-dependent manner. Integral component of the complex transcription machinery that governs circadian rhythmicity and forms a critical negative limb of the circadian clock by directly repressing the expression of core clock components BMAL1 and CLOCK. Also regulates genes involved in metabolic functions, including lipid metabolism and the inflammatory response. Acts as a receptor for heme which stimulates its interaction with the NCOR1/HDAC3 corepressor complex, enhancing transcriptional repression. Recognizes two classes of DNA response elements within the promoter of its target genes and can bind to DNA as either monomers or homodimers, depending on the nature of the response element. Binds as a monomer to a response element composed of the consensus half-site motif 5'-[A/G]GGTCA-3' preceded by an A/T-rich 5' sequence (RevRE), or as a homodimer to a direct repeat of the core motif spaced by two nuclegotides (RevDR-2). Acts as a potent competitive repressor of ROR alpha (RORA) function and also negatively regulates the expression of NR1D1. Regulates lipid and energy homeostasis in the skeletal muscle via repression of genes involved in lipid metabolism and myogenesis including: CD36, FABP3, FABP4, UCP3, SCD1 and MSTN. Regulates hepatic lipid metabolism via the repression of APOC3. Represses gene expression at a distance in macrophages by inhibiting the transcription of enhancer-derived RNAs (eRNAs). In addition to its activity as a repressor, can also act as a transcriptional activator. Acts as a transcriptional activator of the sterol regulatory element-binding protein 1 (SREBF1) and the inflammatory mediator interleukin-6 (IL6) in the skeletal muscle. Plays a role in the regulation of circadian sleep/wake cycle; essential for maintaining wakefulness during the dark phase or active period. Key regulator of skeletal muscle mitochondrial function; negatively regulates the skeletal muscle expression of core clock genes and genes involved in mitochondrial biogenesis, fatty acid beta-oxidation and lipid metabolism. May play a role in the circadian control of neutrophilic inflammation in the lung. The sequence is that of Nuclear receptor subfamily 1 group D member 2 from Rattus norvegicus (Rat).